Reading from the N-terminus, the 519-residue chain is Glycogen synthase (519 aa).

The tract at residues 1–40 (MISAAVEPHVDAFKPDNREPLTPDFATTGKAPGAQRQHNP) is disordered. Residues 8–21 (PHVDAFKPDNREPL) show a composition bias toward basic and acidic residues. Residue Lys-57 coordinates ADP-alpha-D-glucose.

This sequence belongs to the glycosyltransferase 1 family. Bacterial/plant glycogen synthase subfamily.

It catalyses the reaction [(1-&gt;4)-alpha-D-glucosyl](n) + ADP-alpha-D-glucose = [(1-&gt;4)-alpha-D-glucosyl](n+1) + ADP + H(+). It functions in the pathway glycan biosynthesis; glycogen biosynthesis. Functionally, synthesizes alpha-1,4-glucan chains using ADP-glucose. This chain is Glycogen synthase, found in Pseudomonas putida (strain ATCC 47054 / DSM 6125 / CFBP 8728 / NCIMB 11950 / KT2440).